The sequence spans 189 residues: UPF0301 protein PFLU_5755 (189 aa).

The protein belongs to the UPF0301 (AlgH) family.

This chain is UPF0301 protein PFLU_5755, found in Pseudomonas fluorescens (strain SBW25).